We begin with the raw amino-acid sequence, 169 residues long: Transcription antitermination protein NusB (169 aa).

The interval 147–169 (RGLIDQSFSRPQKPESEATEIEE) is disordered.

It belongs to the NusB family.

Its function is as follows. Involved in transcription antitermination. Required for transcription of ribosomal RNA (rRNA) genes. Binds specifically to the boxA antiterminator sequence of the ribosomal RNA (rrn) operons. The sequence is that of Transcription antitermination protein NusB from Chlorobium chlorochromatii (strain CaD3).